The sequence spans 133 residues: Large ribosomal subunit protein uL14 (133 aa).

This sequence belongs to the universal ribosomal protein uL14 family. Part of the 50S ribosomal subunit. Forms a cluster with proteins L3 and L24e, part of which may contact the 16S rRNA in 2 intersubunit bridges.

Functionally, binds to 23S rRNA. Forms part of two intersubunit bridges in the 70S ribosome. The protein is Large ribosomal subunit protein uL14 of Methanopyrus kandleri (strain AV19 / DSM 6324 / JCM 9639 / NBRC 100938).